Reading from the N-terminus, the 179-residue chain is UPF0398 protein Bsph_0756 (179 aa).

It belongs to the UPF0398 family.

This chain is UPF0398 protein Bsph_0756, found in Lysinibacillus sphaericus (strain C3-41).